Consider the following 1044-residue polypeptide: Translation initiation factor IF-2 (1044 aa).

Positions 55–458 are disordered; that stretch reads EAQEGQGAGK…KRKASAQERR (404 aa). A compositionally biased stretch (low complexity) spans 57–77; the sequence is QEGQGAGKSAAKSAKPAAQPK. Positions 104–146 are enriched in basic and acidic residues; it reads LSEKRERRPLTERRPLAERRPLAERPLVDRPVTERPLAERPAA. Low complexity-rich tracts occupy residues 147–168, 190–231, and 254–265; these read ELRP…AQPV, KAQP…QKPA, and ASSRPASAAPAA. The segment covering 267 to 281 has biased composition (basic and acidic residues); sequence GEKRPAAAAERREEP. 2 stretches are compositionally biased toward low complexity: residues 352–375 and 383–395; these read AAGQ…AGAP and APQR…APLA. Over residues 399–444 the composition is skewed to basic and acidic residues; it reads LDPKVAEQAKAGEGKPRYGQSGDKRRADLYDRREHPSSQPSEEKLF. The tr-type G domain maps to 546-714; sequence PRHPVVTIMG…ILVLAEVSDL (169 aa). Residues 555–562 form a G1 region; the sequence is GHVDHGKT. 555–562 contributes to the GTP binding site; the sequence is GHVDHGKT. Residues 580–584 form a G2 region; sequence GITQH. The segment at 601-604 is G3; it reads DTPG. GTP-binding positions include 601–605 and 655–658; these read DTPGH and NKID. A G4 region spans residues 655–658; that stretch reads NKID. The tract at residues 691–693 is G5; it reads SAK.

The protein belongs to the TRAFAC class translation factor GTPase superfamily. Classic translation factor GTPase family. IF-2 subfamily.

It is found in the cytoplasm. Functionally, one of the essential components for the initiation of protein synthesis. Protects formylmethionyl-tRNA from spontaneous hydrolysis and promotes its binding to the 30S ribosomal subunits. Also involved in the hydrolysis of GTP during the formation of the 70S ribosomal complex. This chain is Translation initiation factor IF-2, found in Symbiobacterium thermophilum (strain DSM 24528 / JCM 14929 / IAM 14863 / T).